The chain runs to 257 residues: MPKRTGDILISTPVSKVRRKLNFDSPYTSRAAAPTVQGIKRRSWTYRPMYRKPRMYRMYRSPDVPFGCEGPCKVQSYEQRDDVKHTGVVRCVSDVTRGSGITHRVGKRFCIKSIYILGKIWMDENIKKQNHTNQVMFFLVRDRRPYGTSPMDFGQVFNMFDNEPSTATVKNDLRDRYQVMRKFHATVVGGPSGMKEQCLLKRFFKVNTHVVYNHQEQAKYENHTENALLLYMACTHASNPVYATLKIRIYFYDAVTN.

A Bipartite nuclear localization signal motif is present at residues lysine 3–lysine 20. The Nuclear localization signal signature appears at lysine 40–arginine 54. A zinc finger spans residues cysteine 68–histidine 85. The short motif at isoleucine 101–methionine 122 is the Nuclear export signal element. The short motif at lysine 201–arginine 248 is the Bipartite nuclear localization signal element.

It belongs to the geminiviridae capsid protein family. Homomultimer. Binds to single-stranded and double-stranded viral DNA. Interacts (via nuclear localization signals) with host importin alpha-1a.

It localises to the virion. The protein resides in the host nucleus. Encapsidates the viral genome into characteristic twinned ('geminate') particles. Binds the genomic viral ssDNA and shuttles it into and out of the cell nucleus. Plays a role in protection of the genome from degradation, virus acquisition and transmission by insect vectors, infectivity, and systemic movement. The CP of monopartite geminiviruses is absolutely essential for virus movement. In Tomato yellow leaf curl Sardinia virus (isolate Spain-1) (TYLCSV), this protein is Capsid protein.